The following is a 109-amino-acid chain: Phosphocarrier protein HPr (109 aa).

The HPr domain maps to 22 to 109 (ELSAVFTIRN…EVFNSGFGEL (88 aa)). H36 functions as the Pros-phosphohistidine intermediate in the catalytic mechanism.

This sequence belongs to the HPr family.

It is found in the cytoplasm. Its function is as follows. General (non sugar-specific) component of the phosphoenolpyruvate-dependent sugar phosphotransferase system (sugar PTS). This major carbohydrate active-transport system catalyzes the phosphorylation of incoming sugar substrates concomitantly with their translocation across the cell membrane. The phosphoryl group from phosphoenolpyruvate (PEP) is transferred to the phosphoryl carrier protein HPr by enzyme I. Phospho-HPr then transfers it to the PTS EIIA domain. The sequence is that of Phosphocarrier protein HPr (ptsH) from Chlamydia trachomatis serovar D (strain ATCC VR-885 / DSM 19411 / UW-3/Cx).